The primary structure comprises 103 residues: Large ribosomal subunit protein bL21 (103 aa).

Belongs to the bacterial ribosomal protein bL21 family. Part of the 50S ribosomal subunit. Contacts protein L20.

Functionally, this protein binds to 23S rRNA in the presence of protein L20. The polypeptide is Large ribosomal subunit protein bL21 (Salmonella paratyphi A (strain ATCC 9150 / SARB42)).